A 191-amino-acid chain; its full sequence is Ciliary microtubule-associated protein 3 (191 aa).

Interacts with proteins involved in ciliary transport, including ARL13B, CETN1, KIF3A, RAB6A, RAB8A, TUBB1 and TUBG1. Interacts with AURKA.

The protein resides in the cytoplasmic vesicle. It localises to the golgi apparatus. The protein localises to the trans-Golgi network. Its subcellular location is the cytoplasm. Functionally, during primary cilia disassembly, involved in cilia disassembly. Required specifically to control cilia retraction as well as the liberation and duplication of the basal body/centrosome. May act by stimulating AURKA activity at the basal body in a cell cycle-dependent manner. The polypeptide is Ciliary microtubule-associated protein 3 (Homo sapiens (Human)).